We begin with the raw amino-acid sequence, 296 residues long: Formylmethanofuran--tetrahydromethanopterin formyltransferase-like protein (296 aa).

Belongs to the FTR family.

The polypeptide is Formylmethanofuran--tetrahydromethanopterin formyltransferase-like protein (ehaS) (Methanothermobacter marburgensis (strain ATCC BAA-927 / DSM 2133 / JCM 14651 / NBRC 100331 / OCM 82 / Marburg) (Methanobacterium thermoautotrophicum)).